The chain runs to 460 residues: 25S rRNA (cytosine-C(5))-methyltransferase rcm1 (460 aa).

S-adenosyl-L-methionine is bound by residues Cys-223–Lys-229, Glu-246, Asp-273, and Asp-293. Cys-350 (nucleophile) is an active-site residue. A compositionally biased stretch (basic and acidic residues) spans Lys-430–Lys-439. The disordered stretch occupies residues Lys-430–Glu-460. Over residues Lys-440 to Glu-460 the composition is skewed to basic residues.

It belongs to the class I-like SAM-binding methyltransferase superfamily. RsmB/NOP family. In terms of assembly, interacts with trm112.

It is found in the nucleus. Its subcellular location is the nucleolus. The catalysed reaction is a cytidine in 25S rRNA + S-adenosyl-L-methionine = a 5-methylcytidine in 25S rRNA + S-adenosyl-L-homocysteine + H(+). In terms of biological role, S-adenosyl-L-methionine-dependent methyltransferase that specifically methylates the C(5) position of a cytosine in 25S rRNA. This chain is 25S rRNA (cytosine-C(5))-methyltransferase rcm1 (rcm1), found in Schizosaccharomyces pombe (strain 972 / ATCC 24843) (Fission yeast).